The primary structure comprises 356 residues: Cyclin-dependent kinase 5 activator 1 (356 aa).

Disordered stretches follow at residues 1-53 (MGAN…AKES) and 66-99 (IQPV…FTRN). Composition is skewed to low complexity over residues 40-49 (SNTSSRSSSN) and 71-92 (SRRS…SSDS).

This sequence belongs to the cyclin-dependent kinase 5 activator family. Heterodimer composed of a catalytic subunit cdk-5 and a regulatory subunit cdka-1. Interaction with cdka-1 is required for cdk-5 activation. In terms of tissue distribution, expressed in all classes of neurons in the ventral cord.

The protein resides in the cytoplasm. Its subcellular location is the cell projection. It is found in the dendrite. The protein localises to the axon. In terms of biological role, activator of the kinase cdk-5. In several motor neurons, promotes the polarized trafficking of synaptic vesicles and dense-core vesicles. In the ventral nerve cord, regulates the synaptic localization of the glutamate receptor, glr-1. In DA motor neurons, regulates axonal transport of synaptic vesicle precursors by inhibiting dynein-mediated retrograde transport. Regulates the polarized distribution of dense-core vesicles in DB motor neurons. May regulate these processes in association with cdk-5. May also play a role in GABAergic synaptic vesicle localization in the ventral nerve cord. The sequence is that of Cyclin-dependent kinase 5 activator 1 from Caenorhabditis elegans.